The following is a 609-amino-acid chain: UvrABC system protein C (609 aa).

The 79-residue stretch at 16 to 94 (SSAGVYRMYD…IKQYMPKYNV (79 aa)) folds into the GIY-YIG domain. The 36-residue stretch at 203-238 (KQVISELVAKMEEAAEQQAYEQAARFRDQIMALRRV) folds into the UVR domain.

It belongs to the UvrC family. In terms of assembly, interacts with UvrB in an incision complex.

Its subcellular location is the cytoplasm. Functionally, the UvrABC repair system catalyzes the recognition and processing of DNA lesions. UvrC both incises the 5' and 3' sides of the lesion. The N-terminal half is responsible for the 3' incision and the C-terminal half is responsible for the 5' incision. This is UvrABC system protein C from Shewanella oneidensis (strain ATCC 700550 / JCM 31522 / CIP 106686 / LMG 19005 / NCIMB 14063 / MR-1).